Reading from the N-terminus, the 339-residue chain is Undifferentiated embryonic cell transcription factor 1 (339 aa).

2 disordered regions span residues 1-62 (MLLR…QRTP) and 144-270 (MGLL…QVAP). Phosphoserine is present on residues serine 15, serine 18, serine 48, and serine 54. The segment covering 154–170 (RVRRRSTGPGRPQRRGR) has biased composition (basic residues). 2 stretches are compositionally biased toward low complexity: residues 171-193 (SSLS…PLAA) and 218-229 (TSSPPLTSTDTL). Over residues 261 to 270 (GRASSPQVAP) the composition is skewed to polar residues. Positions 279–310 (QTLTHLGDISTVLGPLRDQLSTLNQHVEHLRG) are leucine-zipper.

In terms of assembly, binds to the N-terminal region of ATF2. Associates with the TFIID complex through interaction with TBP. In terms of processing, phosphorylated. As to expression, expressed mainly in pluripotent cells with expression rapidly down-regulated upon cell differentiation.

The protein resides in the nucleus. Acts as a transcriptional coactivator of ATF2. This Mus musculus (Mouse) protein is Undifferentiated embryonic cell transcription factor 1.